Reading from the N-terminus, the 1400-residue chain is DNA-directed RNA polymerase subunit beta' (1400 aa).

Residues C70, C72, C85, and C88 each contribute to the Zn(2+) site. The Mg(2+) site is built by D460, D462, and D464. C814, C888, C895, and C898 together coordinate Zn(2+). The disordered stretch occupies residues 1367-1400; that stretch reads DRQAKRAEAQEGPSAEQATDNLAALLNAGFSSDE.

Belongs to the RNA polymerase beta' chain family. In terms of assembly, the RNAP catalytic core consists of 2 alpha, 1 beta, 1 beta' and 1 omega subunit. When a sigma factor is associated with the core the holoenzyme is formed, which can initiate transcription. It depends on Mg(2+) as a cofactor. Zn(2+) serves as cofactor.

The enzyme catalyses RNA(n) + a ribonucleoside 5'-triphosphate = RNA(n+1) + diphosphate. DNA-dependent RNA polymerase catalyzes the transcription of DNA into RNA using the four ribonucleoside triphosphates as substrates. This is DNA-directed RNA polymerase subunit beta' from Vibrio campbellii (strain ATCC BAA-1116).